Here is a 437-residue protein sequence, read N- to C-terminus: Trigger factor (437 aa).

Positions 165–251 (GDLVVIDFKG…LHTIKEKEKI (87 aa)) constitute a PPIase FKBP-type domain.

The protein belongs to the FKBP-type PPIase family. Tig subfamily.

The protein resides in the cytoplasm. The catalysed reaction is [protein]-peptidylproline (omega=180) = [protein]-peptidylproline (omega=0). Functionally, involved in protein export. Acts as a chaperone by maintaining the newly synthesized protein in an open conformation. Functions as a peptidyl-prolyl cis-trans isomerase. This Nitratiruptor sp. (strain SB155-2) protein is Trigger factor.